Reading from the N-terminus, the 233-residue chain is MILLKLNSLINIPIYIGSATSYRQKKFINYIYKKYNNKHFFNIFIILKYLSKAYLYLYILSKYNRSLLFLNSSIKNFNLIKSLANLTNNFYINFFYKIDFLFNWIMFKNKLILLKWLKQLYTFYLKYLFNYLPYNLLIKLYYIYINILKKFGGLEYMQKLPKNIFICNSYSNYLYKNLNLKNFLIISIVDINNENTLKNISVRIIGNNKSYLAIKFIFNILLTALLHGSLFNK.

It belongs to the universal ribosomal protein uS2 family.

Its subcellular location is the plastid. The protein localises to the apicoplast. This Toxoplasma gondii protein is Small ribosomal subunit protein uS2c.